Here is a 254-residue protein sequence, read N- to C-terminus: Hydrolase tropI (254 aa).

Catalysis depends on residues Cys141, Asp187, and His219.

It belongs to the dienelactone hydrolase family.

Its pathway is secondary metabolite biosynthesis. Hydrolase; part of the gene cluster that mediates the biosynthesis of the tropolone class of fungal maleic anhydrides. The pathway begins with the synthesis of 3-methylorcinaldehyde by the non-reducing polyketide synthase (PKS) tropA. 3-methylorcinaldehyde is the substrate for the FAD-dependent monooxygenase tropB to yield a dearomatized hydroxycyclohexadione. The 2-oxoglutarate-dependent dioxygenase tropC then performs the oxidative ring expansion to provide the first tropolone metabolite stipitaldehyde. Trop D converts stipitaldehyde into stipitacetal which is in turn converted to stipitalide by the short-chain dehydrogenase/reductase tropE. The next steps involve tropF, tropG, tropH, tropI and tropJ to form successive tropolone maleic anhydrides including stipitaldehydic, stipitatonic and stipitatic acids. In Talaromyces stipitatus (strain ATCC 10500 / CBS 375.48 / QM 6759 / NRRL 1006) (Penicillium stipitatum), this protein is Hydrolase tropI.